The sequence spans 202 residues: Ras-related protein Rab-1A (202 aa).

GTP-binding positions include 15-23 (GDSGVGKSC), 33-40 (YSESFIST), 63-67 (DTAGQ), 121-124 (NKSD), and 151-153 (SAK). Positions 37 to 45 (FISTIGVDF) match the Effector region motif. A disordered region spans residues 180–202 (QTVDKNKVVPGSSAPISPKSGCC). Residues Cys-201 and Cys-202 are each lipidated (S-geranylgeranyl cysteine).

Belongs to the small GTPase superfamily. Rab family.

The protein localises to the cell membrane. The protein is Ras-related protein Rab-1A (rab1A) of Dictyostelium discoideum (Social amoeba).